Reading from the N-terminus, the 160-residue chain is SsrA-binding protein (160 aa).

The protein belongs to the SmpB family.

It localises to the cytoplasm. Functionally, required for rescue of stalled ribosomes mediated by trans-translation. Binds to transfer-messenger RNA (tmRNA), required for stable association of tmRNA with ribosomes. tmRNA and SmpB together mimic tRNA shape, replacing the anticodon stem-loop with SmpB. tmRNA is encoded by the ssrA gene; the 2 termini fold to resemble tRNA(Ala) and it encodes a 'tag peptide', a short internal open reading frame. During trans-translation Ala-aminoacylated tmRNA acts like a tRNA, entering the A-site of stalled ribosomes, displacing the stalled mRNA. The ribosome then switches to translate the ORF on the tmRNA; the nascent peptide is terminated with the 'tag peptide' encoded by the tmRNA and targeted for degradation. The ribosome is freed to recommence translation, which seems to be the essential function of trans-translation. This Photorhabdus laumondii subsp. laumondii (strain DSM 15139 / CIP 105565 / TT01) (Photorhabdus luminescens subsp. laumondii) protein is SsrA-binding protein.